The primary structure comprises 358 residues: Dual-specificity RNA methyltransferase RlmN (358 aa).

The active-site Proton acceptor is the Glu91. A Radical SAM core domain is found at 98–335 (SQGRITQCLS…AIIRKSKGAD (238 aa)). A disulfide bridge links Cys105 with Cys340. Residues Cys112, Cys116, and Cys119 each coordinate [4Fe-4S] cluster. Residues 164–165 (GE), Ser196, 219–221 (SLH), and Asn295 contribute to the S-adenosyl-L-methionine site. Residue Cys340 is the S-methylcysteine intermediate of the active site.

This sequence belongs to the radical SAM superfamily. RlmN family. Requires [4Fe-4S] cluster as cofactor.

The protein localises to the cytoplasm. It catalyses the reaction adenosine(2503) in 23S rRNA + 2 reduced [2Fe-2S]-[ferredoxin] + 2 S-adenosyl-L-methionine = 2-methyladenosine(2503) in 23S rRNA + 5'-deoxyadenosine + L-methionine + 2 oxidized [2Fe-2S]-[ferredoxin] + S-adenosyl-L-homocysteine. The enzyme catalyses adenosine(37) in tRNA + 2 reduced [2Fe-2S]-[ferredoxin] + 2 S-adenosyl-L-methionine = 2-methyladenosine(37) in tRNA + 5'-deoxyadenosine + L-methionine + 2 oxidized [2Fe-2S]-[ferredoxin] + S-adenosyl-L-homocysteine. Its function is as follows. Specifically methylates position 2 of adenine 2503 in 23S rRNA and position 2 of adenine 37 in tRNAs. m2A2503 modification seems to play a crucial role in the proofreading step occurring at the peptidyl transferase center and thus would serve to optimize ribosomal fidelity. This chain is Dual-specificity RNA methyltransferase RlmN, found in Oleidesulfovibrio alaskensis (strain ATCC BAA-1058 / DSM 17464 / G20) (Desulfovibrio alaskensis).